The primary structure comprises 231 residues: Orotidine 5'-phosphate decarboxylase (231 aa).

Substrate-binding positions include Asp11, Lys33, 60 to 69 (DLKFHDIPNT), Thr120, Arg181, Gln190, Gly210, and Arg211. The active-site Proton donor is the Lys62.

The protein belongs to the OMP decarboxylase family. Type 1 subfamily. In terms of assembly, homodimer.

The catalysed reaction is orotidine 5'-phosphate + H(+) = UMP + CO2. Its pathway is pyrimidine metabolism; UMP biosynthesis via de novo pathway; UMP from orotate: step 2/2. Its function is as follows. Catalyzes the decarboxylation of orotidine 5'-monophosphate (OMP) to uridine 5'-monophosphate (UMP). The polypeptide is Orotidine 5'-phosphate decarboxylase (Colwellia psychrerythraea (strain 34H / ATCC BAA-681) (Vibrio psychroerythus)).